We begin with the raw amino-acid sequence, 187 residues long: Putative adenylate kinase (187 aa).

ATP-binding residues include G10, G12, K13, T14, and V15. Residues 30–53 (SLSQFVIENKLYTEYDELRQSYII) form an NMP region. The tract at residues 103 to 113 (GRGWADIKVAE) is LID. ATP is bound at residue R104.

The protein belongs to the adenylate kinase family. AK6 subfamily. In terms of assembly, interacts with uS11. Not a structural component of 40S pre-ribosomes, but transiently interacts with them by binding to uS11.

The enzyme catalyses AMP + ATP = 2 ADP. It carries out the reaction ATP + H2O = ADP + phosphate + H(+). Its function is as follows. Broad-specificity nucleoside monophosphate (NMP) kinase that catalyzes the reversible transfer of the terminal phosphate group between nucleoside triphosphates and monophosphates. Also has ATPase activity. Involved in the late maturation steps of the 30S ribosomal particles, specifically 16S rRNA maturation. While NMP activity is not required for ribosome maturation, ATPase activity is. Associates transiently with small ribosomal subunit protein uS11. ATP hydrolysis breaks the interaction with uS11. May temporarily remove uS11 from the ribosome to enable a conformational change of the ribosomal RNA that is needed for the final maturation step of the small ribosomal subunit. The sequence is that of Putative adenylate kinase from Saccharolobus islandicus (strain M.16.4 / Kamchatka #3) (Sulfolobus islandicus).